A 429-amino-acid polypeptide reads, in one-letter code: Phosphoglucosamine mutase (429 aa).

Residue Ser-96 is the Phosphoserine intermediate of the active site. 4 residues coordinate Mg(2+): Ser-96, Asp-230, Asp-232, and Asp-234. Phosphoserine is present on Ser-96.

Belongs to the phosphohexose mutase family. It depends on Mg(2+) as a cofactor. In terms of processing, activated by phosphorylation.

It carries out the reaction alpha-D-glucosamine 1-phosphate = D-glucosamine 6-phosphate. In terms of biological role, catalyzes the conversion of glucosamine-6-phosphate to glucosamine-1-phosphate. In Thermotoga petrophila (strain ATCC BAA-488 / DSM 13995 / JCM 10881 / RKU-1), this protein is Phosphoglucosamine mutase.